The following is a 474-amino-acid chain: 15-cis-phytoene desaturase (474 aa).

Belongs to the carotenoid/retinoid oxidoreductase family.

It localises to the cell membrane. The enzyme catalyses 2 a plastoquinone + 15-cis-phytoene = 9,9',15-tri-cis-zeta-carotene + 2 a plastoquinol. Its pathway is carotenoid biosynthesis; lycopene biosynthesis. Inhibited by the herbicide norflurazon in a non-competitive way. Its function is as follows. This enzyme converts phytoene into zeta-carotene via the intermediary of phytofluene by the symmetrical introduction of two double bonds at the C-11 and C-11' positions of phytoene. Also active with phytofluene and 1,2-epoxyphytoene as substrates. The chain is 15-cis-phytoene desaturase (pds) from Synechococcus elongatus (strain ATCC 33912 / PCC 7942 / FACHB-805) (Anacystis nidulans R2).